A 381-amino-acid chain; its full sequence is Ecotin-like protein 3 (381 aa).

The interval 232–381 (EHLEVCPKNN…GSKADPVDGK (150 aa)) is disordered. The segment covering 273-292 (NESSPSRPRLSSTAYWPQEN) has biased composition (polar residues). Basic and acidic residues predominate over residues 336–347 (RKAEDDVYEKTM). The segment covering 363-372 (SASSTKSGNG) has biased composition (polar residues).

The protein belongs to the protease inhibitor I11 (ecotin) family.

This chain is Ecotin-like protein 3, found in Leishmania major.